We begin with the raw amino-acid sequence, 93 residues long: UPF0058 protein AF_0738 (93 aa).

It belongs to the UPF0058 family.

The protein is UPF0058 protein AF_0738 of Archaeoglobus fulgidus (strain ATCC 49558 / DSM 4304 / JCM 9628 / NBRC 100126 / VC-16).